We begin with the raw amino-acid sequence, 370 residues long: Peptidoglycan glycosyltransferase MrdB (370 aa).

Transmembrane regions (helical) follow at residues 20-40 (MLLI…SASG), 50-70 (IGQI…PPRV), 75-95 (APYL…FGAI), 136-156 (SLKN…LVAA), 160-180 (LGTS…SGLS), 183-203 (LIGV…FFLM), 263-283 (FIFA…LLAL), 312-332 (LILF…LPVV), and 336-356 (LPLV…FGIV).

The protein belongs to the SEDS family. MrdB/RodA subfamily.

It localises to the cell inner membrane. It carries out the reaction [GlcNAc-(1-&gt;4)-Mur2Ac(oyl-L-Ala-gamma-D-Glu-L-Lys-D-Ala-D-Ala)](n)-di-trans,octa-cis-undecaprenyl diphosphate + beta-D-GlcNAc-(1-&gt;4)-Mur2Ac(oyl-L-Ala-gamma-D-Glu-L-Lys-D-Ala-D-Ala)-di-trans,octa-cis-undecaprenyl diphosphate = [GlcNAc-(1-&gt;4)-Mur2Ac(oyl-L-Ala-gamma-D-Glu-L-Lys-D-Ala-D-Ala)](n+1)-di-trans,octa-cis-undecaprenyl diphosphate + di-trans,octa-cis-undecaprenyl diphosphate + H(+). The protein operates within cell wall biogenesis; peptidoglycan biosynthesis. Functionally, peptidoglycan polymerase that is essential for cell wall elongation. The sequence is that of Peptidoglycan glycosyltransferase MrdB from Escherichia coli O157:H7.